Reading from the N-terminus, the 202-residue chain is Peptidyl-tRNA hydrolase (202 aa).

Tyr-22 contributes to the tRNA binding site. Catalysis depends on His-27, which acts as the Proton acceptor. Residues Phe-69, Asn-71, and Asn-117 each contribute to the tRNA site.

The protein belongs to the PTH family. In terms of assembly, monomer.

Its subcellular location is the cytoplasm. It carries out the reaction an N-acyl-L-alpha-aminoacyl-tRNA + H2O = an N-acyl-L-amino acid + a tRNA + H(+). Hydrolyzes ribosome-free peptidyl-tRNAs (with 1 or more amino acids incorporated), which drop off the ribosome during protein synthesis, or as a result of ribosome stalling. Functionally, catalyzes the release of premature peptidyl moieties from peptidyl-tRNA molecules trapped in stalled 50S ribosomal subunits, and thus maintains levels of free tRNAs and 50S ribosomes. The sequence is that of Peptidyl-tRNA hydrolase from Thiobacillus denitrificans (strain ATCC 25259 / T1).